Reading from the N-terminus, the 287-residue chain is Bifunctional protein FolD (287 aa).

Residues 166-168 and Ile-232 each bind NADP(+); that span reads GAS.

The protein belongs to the tetrahydrofolate dehydrogenase/cyclohydrolase family. In terms of assembly, homodimer.

It catalyses the reaction (6R)-5,10-methylene-5,6,7,8-tetrahydrofolate + NADP(+) = (6R)-5,10-methenyltetrahydrofolate + NADPH. The catalysed reaction is (6R)-5,10-methenyltetrahydrofolate + H2O = (6R)-10-formyltetrahydrofolate + H(+). Its pathway is one-carbon metabolism; tetrahydrofolate interconversion. Catalyzes the oxidation of 5,10-methylenetetrahydrofolate to 5,10-methenyltetrahydrofolate and then the hydrolysis of 5,10-methenyltetrahydrofolate to 10-formyltetrahydrofolate. This Aeromonas salmonicida (strain A449) protein is Bifunctional protein FolD.